The sequence spans 99 residues: Cytochrome c oxidase subunit 4 isoform 1, mitochondrial (99 aa).

Over 1–73 (SVVKSEDFTL…SFAEMNRRSN (73 aa)) the chain is Mitochondrial matrix. The residue at position 4 (K4) is an N6-acetyllysine; alternate. K4 is subject to N6-succinyllysine; alternate. Position 28 is an N6-acetyllysine (K28). Phosphoserine occurs at positions 31 and 33. K35 carries the N6-acetyllysine; alternate modification. K35 is subject to N6-succinyllysine; alternate. K42 carries the post-translational modification N6-acetyllysine. Residues 74–99 (EWKTVVGTAMFFIGITALVIMWEKLY) form a helical membrane-spanning segment.

It belongs to the cytochrome c oxidase IV family. In terms of assembly, component of the cytochrome c oxidase (complex IV, CIV), a multisubunit enzyme composed of 14 subunits. The complex is composed of a catalytic core of 3 subunits MT-CO1, MT-CO2 and MT-CO3, encoded in the mitochondrial DNA, and 11 supernumerary subunits COX4I, COX5A, COX5B, COX6A, COX6B, COX6C, COX7A, COX7B, COX7C, COX8 and NDUFA4, which are encoded in the nuclear genome. The complex exists as a monomer or a dimer and forms supercomplexes (SCs) in the inner mitochondrial membrane with NADH-ubiquinone oxidoreductase (complex I, CI) and ubiquinol-cytochrome c oxidoreductase (cytochrome b-c1 complex, complex III, CIII), resulting in different assemblies (supercomplex SCI(1)III(2)IV(1) and megacomplex MCI(2)III(2)IV(2)). Interacts with PHB2; the interaction decreases in absence of SPHK2. Interacts with AFG1L. Interacts with ABCB7; this interaction allows the regulation of cellular iron homeostasis and cellular reactive oxygen species (ROS) levels in cardiomyocytes. Interacts with FLVCR2; this interaction occurs in the absence of heme and is disrupted upon heme binding. Interacts with IRGC.

The protein resides in the mitochondrion inner membrane. The protein operates within energy metabolism; oxidative phosphorylation. In terms of biological role, component of the cytochrome c oxidase, the last enzyme in the mitochondrial electron transport chain which drives oxidative phosphorylation. The respiratory chain contains 3 multisubunit complexes succinate dehydrogenase (complex II, CII), ubiquinol-cytochrome c oxidoreductase (cytochrome b-c1 complex, complex III, CIII) and cytochrome c oxidase (complex IV, CIV), that cooperate to transfer electrons derived from NADH and succinate to molecular oxygen, creating an electrochemical gradient over the inner membrane that drives transmembrane transport and the ATP synthase. Cytochrome c oxidase is the component of the respiratory chain that catalyzes the reduction of oxygen to water. Electrons originating from reduced cytochrome c in the intermembrane space (IMS) are transferred via the dinuclear copper A center (CU(A)) of subunit 2 and heme A of subunit 1 to the active site in subunit 1, a binuclear center (BNC) formed by heme A3 and copper B (CU(B)). The BNC reduces molecular oxygen to 2 water molecules using 4 electrons from cytochrome c in the IMS and 4 protons from the mitochondrial matrix. This chain is Cytochrome c oxidase subunit 4 isoform 1, mitochondrial (COX4I1), found in Mandrillus sphinx (Mandrill).